The chain runs to 606 residues: Kelch-like protein 41 (606 aa).

Position 3 is a phosphoserine (Ser-3). Residues 33–100 enclose the BTB domain; that stretch reads IDCTLKAGDK…LYSASIDLND (68 aa). The 103-residue stretch at 135-237 folds into the BACK domain; sequence CLAILRLGLL…TEKYFKDHVE (103 aa). 5 Kelch repeats span residues 346-398, 399-447, 448-495, 497-542, and 544-599; these read QIYV…EVDD, KIYV…SHKG, MIYC…VHKG, IVIA…SLAG, and LYAI…TRLN.

As to quaternary structure, interacts with NRAP. Interacts with LASP1. Part of a complex that contains CUL3, RBX1 and KLHL41. Post-translationally, ubiquitinated by E3 ubiquitin ligase complex formed by CUL3 and RBX1 and probably targeted for proteasome-independent degradation. Quinone-induced oxidative stress increases its ubiquitination. As to expression, sarcomeric muscle.

The protein resides in the cytoplasm. It localises to the cytoskeleton. The protein localises to the cell projection. It is found in the pseudopodium. Its subcellular location is the ruffle. The protein resides in the myofibril. It localises to the sarcomere. The protein localises to the m line. It is found in the sarcoplasmic reticulum membrane. Its subcellular location is the endoplasmic reticulum membrane. Functionally, involved in skeletal muscle development and differentiation. Regulates proliferation and differentiation of myoblasts and plays a role in myofibril assembly by promoting lateral fusion of adjacent thin fibrils into mature, wide myofibrils. Required for pseudopod elongation in transformed cells. The polypeptide is Kelch-like protein 41 (KLHL41) (Homo sapiens (Human)).